We begin with the raw amino-acid sequence, 202 residues long: Nucleoside triphosphate pyrophosphatase (202 aa).

Residue Asp79 is the Proton acceptor of the active site.

It belongs to the Maf family. A divalent metal cation serves as cofactor.

It is found in the cytoplasm. The catalysed reaction is a ribonucleoside 5'-triphosphate + H2O = a ribonucleoside 5'-phosphate + diphosphate + H(+). It catalyses the reaction a 2'-deoxyribonucleoside 5'-triphosphate + H2O = a 2'-deoxyribonucleoside 5'-phosphate + diphosphate + H(+). Its function is as follows. Nucleoside triphosphate pyrophosphatase. May have a dual role in cell division arrest and in preventing the incorporation of modified nucleotides into cellular nucleic acids. The chain is Nucleoside triphosphate pyrophosphatase from Nitrobacter hamburgensis (strain DSM 10229 / NCIMB 13809 / X14).